A 253-amino-acid polypeptide reads, in one-letter code: Imidazole glycerol phosphate synthase subunit HisF (253 aa).

Active-site residues include aspartate 11 and aspartate 130.

The protein belongs to the HisA/HisF family. In terms of assembly, heterodimer of HisH and HisF.

It localises to the cytoplasm. The catalysed reaction is 5-[(5-phospho-1-deoxy-D-ribulos-1-ylimino)methylamino]-1-(5-phospho-beta-D-ribosyl)imidazole-4-carboxamide + L-glutamine = D-erythro-1-(imidazol-4-yl)glycerol 3-phosphate + 5-amino-1-(5-phospho-beta-D-ribosyl)imidazole-4-carboxamide + L-glutamate + H(+). Its pathway is amino-acid biosynthesis; L-histidine biosynthesis; L-histidine from 5-phospho-alpha-D-ribose 1-diphosphate: step 5/9. Functionally, IGPS catalyzes the conversion of PRFAR and glutamine to IGP, AICAR and glutamate. The HisF subunit catalyzes the cyclization activity that produces IGP and AICAR from PRFAR using the ammonia provided by the HisH subunit. This Geobacter metallireducens (strain ATCC 53774 / DSM 7210 / GS-15) protein is Imidazole glycerol phosphate synthase subunit HisF.